We begin with the raw amino-acid sequence, 297 residues long: Phosphatidylglycerol--prolipoprotein diacylglyceryl transferase (297 aa).

Helical transmembrane passes span 17–37 (LAVR…IVVG), 59–79 (MLFY…VLFY), and 97–117 (GGMS…LFAW). Arg-142 is a binding site for a 1,2-diacyl-sn-glycero-3-phospho-(1'-sn-glycerol). The next 2 helical transmembrane spans lie at 230-250 (MGAV…TVEF) and 257-277 (FLGL…PMIV).

Belongs to the Lgt family.

It is found in the cell inner membrane. The catalysed reaction is L-cysteinyl-[prolipoprotein] + a 1,2-diacyl-sn-glycero-3-phospho-(1'-sn-glycerol) = an S-1,2-diacyl-sn-glyceryl-L-cysteinyl-[prolipoprotein] + sn-glycerol 1-phosphate + H(+). The protein operates within protein modification; lipoprotein biosynthesis (diacylglyceryl transfer). Catalyzes the transfer of the diacylglyceryl group from phosphatidylglycerol to the sulfhydryl group of the N-terminal cysteine of a prolipoprotein, the first step in the formation of mature lipoproteins. This Burkholderia multivorans (strain ATCC 17616 / 249) protein is Phosphatidylglycerol--prolipoprotein diacylglyceryl transferase.